Reading from the N-terminus, the 164-residue chain is Small ribosomal subunit protein uS3m (164 aa).

Residues 1–23 (MLRSIQHVEALSSRQISTTSMLL) constitute a mitochondrion transit peptide.

This sequence belongs to the universal ribosomal protein uS3 family. As to quaternary structure, component of the mitochondrial ribosome small subunit (28S) which comprises a 12S rRNA and about 30 distinct proteins.

The protein localises to the mitochondrion. This chain is Small ribosomal subunit protein uS3m (mrps-24), found in Caenorhabditis elegans.